The primary structure comprises 130 residues: Ribonuclease VapC46 (130 aa).

Residues 4–118 (IYLDSSAIVK…CTYDDRMRDA (115 aa)) form the PINc domain. Mg(2+) is bound by residues Asp7 and Asp91.

This sequence belongs to the PINc/VapC protein family. The cofactor is Mg(2+).

Functionally, toxic component of a type II toxin-antitoxin (TA) system. An RNase. Upon expression in M.smegmatis inhibits colony formation. Its toxic effect is neutralized by coexpression with cognate antitoxin VapB46. This Mycobacterium tuberculosis (strain ATCC 25618 / H37Rv) protein is Ribonuclease VapC46.